The chain runs to 464 residues: Argininosuccinate lyase (464 aa).

Belongs to the lyase 1 family. Argininosuccinate lyase subfamily.

Its subcellular location is the cytoplasm. It catalyses the reaction 2-(N(omega)-L-arginino)succinate = fumarate + L-arginine. It functions in the pathway amino-acid biosynthesis; L-arginine biosynthesis; L-arginine from L-ornithine and carbamoyl phosphate: step 3/3. This chain is Argininosuccinate lyase, found in Pseudomonas paraeruginosa (strain DSM 24068 / PA7) (Pseudomonas aeruginosa (strain PA7)).